The sequence spans 212 residues: Adenylate kinase (212 aa).

10 to 15 contacts ATP; that stretch reads GAGKGT. Positions 30-59 are NMP; the sequence is STGDMFRAAMANQTEMGRLAKSYIDKGELV. AMP contacts are provided by residues threonine 31, arginine 36, 57 to 59, 86 to 89, and glutamine 93; these read ELV and GYPR. The segment at 127 to 159 is LID; the sequence is GRIINRKTGETFHKVFNPPVDYKEEDYYQREDD. Residues arginine 128 and 137-138 contribute to the ATP site; that span reads TF. Residues arginine 156 and arginine 167 each coordinate AMP. Position 195 (glutamine 195) interacts with ATP.

This sequence belongs to the adenylate kinase family. In terms of assembly, monomer.

The protein resides in the cytoplasm. The enzyme catalyses AMP + ATP = 2 ADP. The protein operates within purine metabolism; AMP biosynthesis via salvage pathway; AMP from ADP: step 1/1. In terms of biological role, catalyzes the reversible transfer of the terminal phosphate group between ATP and AMP. Plays an important role in cellular energy homeostasis and in adenine nucleotide metabolism. The polypeptide is Adenylate kinase (Streptococcus pyogenes serotype M3 (strain ATCC BAA-595 / MGAS315)).